Here is a 371-residue protein sequence, read N- to C-terminus: 4-hydroxy-3-methylbut-2-en-1-yl diphosphate synthase (flavodoxin) (371 aa).

Residues Cys-270, Cys-273, Cys-305, and Glu-312 each contribute to the [4Fe-4S] cluster site.

This sequence belongs to the IspG family. [4Fe-4S] cluster serves as cofactor.

It carries out the reaction (2E)-4-hydroxy-3-methylbut-2-enyl diphosphate + oxidized [flavodoxin] + H2O + 2 H(+) = 2-C-methyl-D-erythritol 2,4-cyclic diphosphate + reduced [flavodoxin]. The protein operates within isoprenoid biosynthesis; isopentenyl diphosphate biosynthesis via DXP pathway; isopentenyl diphosphate from 1-deoxy-D-xylulose 5-phosphate: step 5/6. Its function is as follows. Converts 2C-methyl-D-erythritol 2,4-cyclodiphosphate (ME-2,4cPP) into 1-hydroxy-2-methyl-2-(E)-butenyl 4-diphosphate. The protein is 4-hydroxy-3-methylbut-2-en-1-yl diphosphate synthase (flavodoxin) of Shewanella sp. (strain ANA-3).